The following is a 301-amino-acid chain: Acetylglutamate kinase (301 aa).

Substrate contacts are provided by residues Gly64–Gly65, Arg86, and Asn181.

The protein belongs to the acetylglutamate kinase family. ArgB subfamily.

Its subcellular location is the cytoplasm. It carries out the reaction N-acetyl-L-glutamate + ATP = N-acetyl-L-glutamyl 5-phosphate + ADP. Its pathway is amino-acid biosynthesis; L-arginine biosynthesis; N(2)-acetyl-L-ornithine from L-glutamate: step 2/4. Its function is as follows. Catalyzes the ATP-dependent phosphorylation of N-acetyl-L-glutamate. This chain is Acetylglutamate kinase, found in Aliarcobacter butzleri (strain RM4018) (Arcobacter butzleri).